Here is a 953-residue protein sequence, read N- to C-terminus: MSDYKHTLNLPETEFPMRGDLAKREPNMLKRWYDQDLYGAIRRAKAGKPSFILHDGPPYANGSIHIGHSVNKILKDIIIKSKGLSGFDSPYVPGWDCHGLPIELKVEGMVGKPGEKVSAAEFRAECRKYAKTQIEAQKTDFIRLGVLGDWEHPYLTMDFGTEANIIRSMAKIVENGHLHKGSKPVHWCTDCGSALAEAEVEYYDKNSPSIDVRFKAVDEAGVAAKFDCAEGHTGKGPISAVIWTTTPWTLPANRGIAMHADLDYALVQVEGEHPERLILAAELVKDVMDRAGIEQFHNLGYAKGAALELLRFNHPFYSFDVPVVLGDHVTLDAGTGAVHTAPGHGQEDFVVGQKYGLEVANPVGSNGVYLPDTELFAGQHVFKANASVVEVLTERGALLHHKVFNHSYPHCWRHKTPIIFRATPQWFISMEQKGLRQRALEEIERIEQDGIKQHGQSGWVPAWGKNRIQAMVENRPDWCISRQRTWGVPISLFVHKETQELHPESVRLMHEVAKRVEQSGIQAWWDLDKAELLGSDADLYDKVPDTLDVWFDSGSTHSSVVDARPEFNGNPADMYLEGSDQHRGWFMSSLMIGVAMKDKAPYNQVLTHGFTVDGQGRKMSKSIGNVVSPQDVMNKLGADILRLWVASTDYTGEMTVSDEILKRSADAYRRIRNTARFLLANLNGFNPATDMVAPADMVVVDRWAVGRAKAVQAEIMAAFDEYNFHGVTQKLMQFCSIEMGSFYLDVIKDRQYTAKADSLARRSCQTALYHIAEAMVRWMAPIMSFTADEIWALLPGERGEFVFTEEWYDGLFGLEAGETLNDDFWAEILTVRGEVNKALEVARGEKRIGGSLQAELTLFAKPALAARLNALADELRFVLLTSKAKVVSVDAAPADAVATERDDLWLSVAQSAAAKCDRCWHHVEDVGTIAGHEEICGRCVTNVEGDGETRQFA.

The short motif at Pro58 to His68 is the 'HIGH' region element. Position 577 (Glu577) interacts with L-isoleucyl-5'-AMP. Positions Lys618–Ser622 match the 'KMSKS' region motif. ATP is bound at residue Lys621. Zn(2+)-binding residues include Cys916, Cys919, Cys936, and Cys939.

It belongs to the class-I aminoacyl-tRNA synthetase family. IleS type 1 subfamily. Monomer. Zn(2+) is required as a cofactor.

Its subcellular location is the cytoplasm. The catalysed reaction is tRNA(Ile) + L-isoleucine + ATP = L-isoleucyl-tRNA(Ile) + AMP + diphosphate. Catalyzes the attachment of isoleucine to tRNA(Ile). As IleRS can inadvertently accommodate and process structurally similar amino acids such as valine, to avoid such errors it has two additional distinct tRNA(Ile)-dependent editing activities. One activity is designated as 'pretransfer' editing and involves the hydrolysis of activated Val-AMP. The other activity is designated 'posttransfer' editing and involves deacylation of mischarged Val-tRNA(Ile). This Aeromonas hydrophila subsp. hydrophila (strain ATCC 7966 / DSM 30187 / BCRC 13018 / CCUG 14551 / JCM 1027 / KCTC 2358 / NCIMB 9240 / NCTC 8049) protein is Isoleucine--tRNA ligase.